Consider the following 329-residue polypeptide: GTPase Obg (329 aa).

The 159-residue stretch at 1–159 folds into the Obg domain; the sequence is MQFIDQAIID…WSLQLELKLL (159 aa). An OBG-type G domain is found at 160–328; the sequence is AEVGIIGLPN…LLSSIWYELG (169 aa). Residues 166–173, 191–195, 213–216, 280–283, and 309–311 each bind ATP; these read GLPNAGKS, FTTLI, DIPG, NKKE, and SAV. Ser-173 and Thr-193 together coordinate Mg(2+).

This sequence belongs to the TRAFAC class OBG-HflX-like GTPase superfamily. OBG GTPase family. As to quaternary structure, monomer. Mg(2+) is required as a cofactor.

It is found in the cytoplasm. Its function is as follows. An essential GTPase which binds GTP, GDP and possibly (p)ppGpp with moderate affinity, with high nucleotide exchange rates and a fairly low GTP hydrolysis rate. Plays a role in control of the cell cycle, stress response, ribosome biogenesis and in those bacteria that undergo differentiation, in morphogenesis control. This chain is GTPase Obg, found in Prochlorococcus marinus (strain NATL1A).